We begin with the raw amino-acid sequence, 328 residues long: MSGLFETLGRRALFAFDAEQAHGLSIAGLKTGLVTGSAPNDLALSVKVAGLQFPNPLGMAAGYDKNAEVPDALLKLGFGFTEIGTITPRPQSGNPRPRIFRLVDDKAVINRLGFNNEGHDAAFKRLSQRAGKSGIVGVNIGANKDAEDRIADYVAGIRRFYQLARYFTVNISSPNTPGLRNLQARDSLRELLSRVLEARNEEGKMCTLKRPVFLKIAPDLANEELDDIAAEATEQKLDGIIISNTTLSRAGLKSAGGRDETGGLSGAPLFDRSTIVLARMRERVGPDMPLIGVGGVDSAETALTKVKAGARSRPALYGPDLSRPEPAY.

A helical transmembrane segment spans residues 21–38 (AHGLSIAGLKTGLVTGSA). FMN contacts are provided by residues 61–65 (AGYDK) and Thr-85. Lys-65 contributes to the substrate binding site. 110–114 (NRLGF) contacts substrate. FMN-binding residues include Asn-139 and Asn-170. Residue 170–175 (NISSPN) participates in substrate binding. Residue Ser-173 is the Nucleophile of the active site. Positions 215 and 243 each coordinate FMN. Position 244-245 (244-245 (NT)) interacts with substrate. Gly-266 and Gly-295 together coordinate FMN.

This sequence belongs to the dihydroorotate dehydrogenase family. Type 2 subfamily. Requires FMN as cofactor.

It is found in the mitochondrion inner membrane. It catalyses the reaction (S)-dihydroorotate + a quinone = orotate + a quinol. It functions in the pathway pyrimidine metabolism; UMP biosynthesis via de novo pathway; orotate from (S)-dihydroorotate (quinone route): step 1/1. Its function is as follows. Catalyzes the conversion of dihydroorotate to orotate with quinone as electron acceptor. The chain is Dihydroorotate dehydrogenase (quinone), mitochondrial (URA1) from Cyclocybe aegerita (Black poplar mushroom).